Reading from the N-terminus, the 82-residue chain is Sec-independent protein translocase protein TatA (82 aa).

Residues 1–21 form a helical membrane-spanning segment; sequence MGGISIWQLLIIAVIIVLLFG. Residues 48-82 form a disordered region; the sequence is SAKDAKKDADFVPQNLEKKEAETVEKQKQNDKEQA.

The protein belongs to the TatA/E family. The Tat system comprises two distinct complexes: a TatABC complex, containing multiple copies of TatA, TatB and TatC subunits, and a separate TatA complex, containing only TatA subunits. Substrates initially bind to the TatABC complex, which probably triggers association of the separate TatA complex to form the active translocon.

It is found in the cell inner membrane. Its function is as follows. Part of the twin-arginine translocation (Tat) system that transports large folded proteins containing a characteristic twin-arginine motif in their signal peptide across membranes. TatA could form the protein-conducting channel of the Tat system. This is Sec-independent protein translocase protein TatA from Aliivibrio salmonicida (strain LFI1238) (Vibrio salmonicida (strain LFI1238)).